The chain runs to 206 residues: MITDYEWPLWQTTALVCGIDEAGRGPLAGPVVAAAVIFPRWFRPVGTILERVNDSKKLSAAERELLAPAIRNAAAFWAVAEVDPETIDQINILQATMLAMNQAVAALPIQPELLLVDGNRFRTELPIPYETVVKGDSKVFSIAAASVLAKTHRDELMVAYASEYPQYGFERHVGYPTRAHVEAIRQHGRCPIHRQSFRLRQLGEKP.

In terms of domain architecture, RNase H type-2 spans 14–206; that stretch reads ALVCGIDEAG…FRLRQLGEKP (193 aa). The a divalent metal cation site is built by D20, E21, and D117.

The protein belongs to the RNase HII family. Mn(2+) is required as a cofactor. The cofactor is Mg(2+).

The protein localises to the cytoplasm. The enzyme catalyses Endonucleolytic cleavage to 5'-phosphomonoester.. Functionally, endonuclease that specifically degrades the RNA of RNA-DNA hybrids. This Pelodictyon phaeoclathratiforme (strain DSM 5477 / BU-1) protein is Ribonuclease HII.